Consider the following 201-residue polypeptide: Probable nicotinate-nucleotide adenylyltransferase (201 aa).

It belongs to the NadD family.

It catalyses the reaction nicotinate beta-D-ribonucleotide + ATP + H(+) = deamido-NAD(+) + diphosphate. Its pathway is cofactor biosynthesis; NAD(+) biosynthesis; deamido-NAD(+) from nicotinate D-ribonucleotide: step 1/1. In terms of biological role, catalyzes the reversible adenylation of nicotinate mononucleotide (NaMN) to nicotinic acid adenine dinucleotide (NaAD). In Carboxydothermus hydrogenoformans (strain ATCC BAA-161 / DSM 6008 / Z-2901), this protein is Probable nicotinate-nucleotide adenylyltransferase.